Consider the following 71-residue polypeptide: UPF0346 protein MGAS2096_Spy0401 (71 aa).

This sequence belongs to the UPF0346 family.

The protein is UPF0346 protein MGAS2096_Spy0401 of Streptococcus pyogenes serotype M12 (strain MGAS2096).